A 427-amino-acid chain; its full sequence is UPF0229 protein YeaH (427 aa).

The segment covering 79-90 has biased composition (basic and acidic residues); it reads NDHFVQNDRIER. Positions 79 to 110 are disordered; the sequence is NDHFVQNDRIERPQGGGGGSGSGQGQASQDGE. Residues 92-102 show a composition bias toward gly residues; sequence QGGGGGSGSGQ.

It belongs to the UPF0229 family.

This is UPF0229 protein YeaH from Escherichia coli O9:H4 (strain HS).